The sequence spans 154 residues: Protein X (154 aa).

Positions proline 68–phenylalanine 117 are mitochondrial targeting sequence.

It belongs to the orthohepadnavirus protein X family. As to quaternary structure, may form homodimer. May interact with host CEBPA, CFLAR, CREB1, DDB1, E4F1, HBXIP, HSPD1/HSP60, NFKBIA, POLR2E and SMAD4. Interacts with host SMC5-SMC6 complex and induces its degradation. Interacts with host TRPC4AP; leading to prevent ubiquitination of TRPC4AP. Interacts with host PLSCR1; this interaction promotes ubiquitination and degradation of HBx and impairs HBx-mediated cell proliferation. Post-translationally, a fraction may be phosphorylated in insect cells and HepG2 cells, a human hepatoblastoma cell line. Phosphorylated in vitro by host protein kinase C or mitogen-activated protein kinase. N-acetylated in insect cells.

It localises to the host cytoplasm. It is found in the host nucleus. Its subcellular location is the host mitochondrion. In terms of biological role, multifunctional protein that plays a role in silencing host antiviral defenses and promoting viral transcription. Does not seem to be essential for HBV infection. May be directly involved in development of cirrhosis and liver cancer (hepatocellular carcinoma). Most of cytosolic activities involve modulation of cytosolic calcium. The effect on apoptosis is controversial depending on the cell types in which the studies have been conducted. May induce apoptosis by localizing in mitochondria and causing loss of mitochondrial membrane potential. May also modulate apoptosis by binding host CFLAR, a key regulator of the death-inducing signaling complex (DISC). Promotes viral transcription by using the host E3 ubiquitin ligase DDB1 to target the SMC5-SMC6 complex to proteasomal degradation. This host complex would otherwise bind to viral episomal DNA, and prevents its transcription. Moderately stimulates transcription of many different viral and cellular transcription elements. Promoters and enhancers stimulated by HBx contain DNA binding sites for NF-kappa-B, AP-1, AP-2, c-EBP, ATF/CREB, or the calcium-activated factor NF-AT. This chain is Protein X, found in Hepatitis B virus genotype B2 (isolate Indonesia/pIDW420/1988) (HBV-B).